The following is a 375-amino-acid chain: Serpin B5 (375 aa).

Asparagine 133, asparagine 298, and asparagine 361 each carry an N-linked (GlcNAc...) asparagine glycan.

Belongs to the serpin family. Ov-serpin subfamily. Interacts with IRF6.

Its subcellular location is the secreted. It localises to the extracellular space. Functionally, tumor suppressor. It blocks the growth, invasion, and metastatic properties of mammary tumors. As it does not undergo the S (stressed) to R (relaxed) conformational transition characteristic of active serpins, it exhibits no serine protease inhibitory activity. The protein is Serpin B5 (Serpinb5) of Mus musculus (Mouse).